A 370-amino-acid polypeptide reads, in one-letter code: tRNA-specific 2-thiouridylase MnmA (370 aa).

Residues glycine 11–serine 18 and methionine 37 contribute to the ATP site. Residues asparagine 97 to aspartate 99 are interaction with target base in tRNA. Cysteine 102 serves as the catalytic Nucleophile. The cysteines at positions 102 and 199 are disulfide-linked. Glycine 126 provides a ligand contact to ATP. An interaction with tRNA region spans residues lysine 149–glutamine 151. Catalysis depends on cysteine 199, which acts as the Cysteine persulfide intermediate. Positions arginine 307–tyrosine 308 are interaction with tRNA.

This sequence belongs to the MnmA/TRMU family.

It localises to the cytoplasm. It carries out the reaction S-sulfanyl-L-cysteinyl-[protein] + uridine(34) in tRNA + AH2 + ATP = 2-thiouridine(34) in tRNA + L-cysteinyl-[protein] + A + AMP + diphosphate + H(+). Functionally, catalyzes the 2-thiolation of uridine at the wobble position (U34) of tRNA, leading to the formation of s(2)U34. The protein is tRNA-specific 2-thiouridylase MnmA of Staphylococcus carnosus (strain TM300).